The sequence spans 547 residues: CDK5RAP1-like protein (547 aa).

The MTTase N-terminal domain maps to 79 to 194 (RTVCYVTYGC…LPRLVAVAAG (116 aa)). 6 residues coordinate [4Fe-4S] cluster: cysteine 88, cysteine 124, cysteine 157, cysteine 232, cysteine 236, and cysteine 239. The Radical SAM core domain occupies 218–475 (DSASKTAFIS…TTVFREEALK (258 aa)). The TRAM domain maps to 478-543 (QALIGSEQTV…SQTLKAQLIG (66 aa)).

Belongs to the methylthiotransferase family. MiaB subfamily. Requires [4Fe-4S] cluster as cofactor.

Functionally, potential regulator of CDK5 activity. This chain is CDK5RAP1-like protein, found in Caenorhabditis elegans.